The chain runs to 621 residues: Threonine--tRNA ligase (621 aa).

The interval 1–137 is editing domain; sequence MRILQLHCDS…ESSKVVTKDS (137 aa). Residues 128 to 150 are disordered; sequence ESSKVVTKDSTTKDDDEDTSDAL. Residues 202–501 are catalytic; sequence PHVALMKKLA…SKKGKKPQLP (300 aa). Positions 294, 346, and 470 each coordinate Zn(2+). The segment covering 598–612 has biased composition (polar residues); sequence QTSGKPYTGLNQSQH. Positions 598-621 are disordered; that stretch reads QTSGKPYTGLNQSQHLSKRPQLMV.

The protein belongs to the class-II aminoacyl-tRNA synthetase family. As to quaternary structure, homodimer. Zn(2+) serves as cofactor.

It is found in the cytoplasm. The enzyme catalyses tRNA(Thr) + L-threonine + ATP = L-threonyl-tRNA(Thr) + AMP + diphosphate + H(+). Catalyzes the attachment of threonine to tRNA(Thr) in a two-step reaction: L-threonine is first activated by ATP to form Thr-AMP and then transferred to the acceptor end of tRNA(Thr). Also edits incorrectly charged L-seryl-tRNA(Thr). This is Threonine--tRNA ligase from Nitrosopumilus maritimus (strain SCM1).